The following is a 642-amino-acid chain: Threonine--tRNA ligase (642 aa).

The TGS domain maps to 1-61; sequence MPVITLPDGS…ENDAQLSIIT (61 aa). The segment at 243–534 is catalytic; sequence DHRKIGKQLD…LTEEFAGFFP (292 aa). K286 is subject to N6-acetyllysine. The Zn(2+) site is built by C334, H385, and H511.

It belongs to the class-II aminoacyl-tRNA synthetase family. In terms of assembly, homodimer. Zn(2+) serves as cofactor.

The protein resides in the cytoplasm. The catalysed reaction is tRNA(Thr) + L-threonine + ATP = L-threonyl-tRNA(Thr) + AMP + diphosphate + H(+). Functionally, catalyzes the attachment of threonine to tRNA(Thr) in a two-step reaction: L-threonine is first activated by ATP to form Thr-AMP and then transferred to the acceptor end of tRNA(Thr). Also edits incorrectly charged L-seryl-tRNA(Thr). The chain is Threonine--tRNA ligase from Escherichia coli O8 (strain IAI1).